A 390-amino-acid chain; its full sequence is MALPLYLVGLSHKTAPLEVRERAALDPVVALPAALSALGKGVVLSTCNRTELYGVGSPEKARAFLLSRGVAPRHLYVKEGVEALRHLYRVAAGLDSLVVGEAQILGQVREALFLARRQGATESLLEKAFQSAIALGKRARSETGIGMGAVSVAYAALDLALAVYGDLSGLSVAVLGAGEMAELFLTHLKAHGVGRILVVNRTEEKAQALAERFGGEAFGLPALPQVLRQADLVVASAAAPHYLVGPEDLPKRAKPLFLIDIALPRNIDPRVGDLPHAYLYNLDDLKRVVDRNLRARAGEIPKVEALIEKALGDYMEWYAGHRVREAIRALEAWARVQAAKAQPEAGPVELEKAAGRLAHPFILGLKRRALDRVGGPPCPEDCLLYRLSRT.

Substrate is bound by residues 46-49, Ser-96, 101-103, and Gln-107; these read TCNR and EAQ. Cys-47 functions as the Nucleophile in the catalytic mechanism. An NADP(+)-binding site is contributed by 176 to 181; that stretch reads GAGEMA.

The protein belongs to the glutamyl-tRNA reductase family. As to quaternary structure, homodimer.

It catalyses the reaction (S)-4-amino-5-oxopentanoate + tRNA(Glu) + NADP(+) = L-glutamyl-tRNA(Glu) + NADPH + H(+). The protein operates within porphyrin-containing compound metabolism; protoporphyrin-IX biosynthesis; 5-aminolevulinate from L-glutamyl-tRNA(Glu): step 1/2. Its function is as follows. Catalyzes the NADPH-dependent reduction of glutamyl-tRNA(Glu) to glutamate 1-semialdehyde (GSA). The polypeptide is Glutamyl-tRNA reductase (Thermus thermophilus (strain ATCC 27634 / DSM 579 / HB8)).